Consider the following 596-residue polypeptide: Aspartate--tRNA(Asp/Asn) ligase (596 aa).

Glutamate 175 contributes to the L-aspartate binding site. Residues 199 to 202 (QQYK) are aspartate. The L-aspartate site is built by arginine 221 and histidine 454. 221–223 (RDE) provides a ligand contact to ATP. Glutamate 488 provides a ligand contact to ATP. Residue arginine 495 participates in L-aspartate binding. 540-543 (GIDR) lines the ATP pocket.

Belongs to the class-II aminoacyl-tRNA synthetase family. Type 1 subfamily. As to quaternary structure, homodimer.

The protein localises to the cytoplasm. The enzyme catalyses tRNA(Asx) + L-aspartate + ATP = L-aspartyl-tRNA(Asx) + AMP + diphosphate. Functionally, aspartyl-tRNA synthetase with relaxed tRNA specificity since it is able to aspartylate not only its cognate tRNA(Asp) but also tRNA(Asn). Reaction proceeds in two steps: L-aspartate is first activated by ATP to form Asp-AMP and then transferred to the acceptor end of tRNA(Asp/Asn). This chain is Aspartate--tRNA(Asp/Asn) ligase, found in Rhizobium johnstonii (strain DSM 114642 / LMG 32736 / 3841) (Rhizobium leguminosarum bv. viciae).